A 346-amino-acid polypeptide reads, in one-letter code: Uracil-DNA glycosylase (346 aa).

Residues 1 to 105 form a disordered region; sequence MSGKITDFFE…KLKNEEKSEE (105 aa). Positions 20–29 are enriched in basic and acidic residues; the sequence is AENKDNDKEL. Over residues 30 to 42 the composition is skewed to low complexity; sequence TSTTTTTTTTSTT. A compositionally biased stretch (basic residues) spans 43-64; sequence SKKKVAAAPKKKAAVASKKRKH. Acidic residues predominate over residues 67–86; it reads SDEETDKEEQQNDDDDDGEE. The Proton acceptor role is filled by aspartate 186.

It belongs to the uracil-DNA glycosylase (UDG) superfamily. UNG family.

The protein resides in the mitochondrion. It localises to the nucleus. The enzyme catalyses Hydrolyzes single-stranded DNA or mismatched double-stranded DNA and polynucleotides, releasing free uracil.. Functionally, excises uracil residues from the DNA which can arise as a result of misincorporation of dUMP residues by DNA polymerase or due to deamination of cytosine. This is Uracil-DNA glycosylase (uglA) from Dictyostelium discoideum (Social amoeba).